Reading from the N-terminus, the 1509-residue chain is Myosin-2 heavy chain, non muscle (1509 aa).

Residues 32 to 85 (SDKTLAWWPTKDADRAFCHVEVTKDDGKNFTVRLENGEEKSQPKNEKNFLGVNP) enclose the Myosin N-terminal SH3-like domain. The Myosin motor domain occupies 89–787 (DGVEDMGELG…QLAAIEELRE (699 aa)). Residue Lys133 is modified to N6,N6,N6-trimethyllysine. An ATP-binding site is contributed by 182–189 (GESGAGKT). Residues 623–643 (APAEEEKAAAGGSRNRSTGRG) are disordered. Actin-binding stretches follow at residues 660 to 682 (LAHL…IPNL) and 766 to 780 (RFGV…GQLA). Residues 790–819 (ISKMVVSIQAGARAFLARRMYDKMREQTVS) form the IQ domain. The alpha-helical tailpiece (S2) stretch occupies residues 848 to 1226 (LISQRNFQKE…AERDSGAQQR (379 aa)). A coiled-coil region spans residues 848 to 1509 (LISQRNFQKE…VRAGSARAEE (662 aa)). Basic and acidic residues-rich tracts occupy residues 958 to 1019 (ELKA…KDAL), 1034 to 1047 (KNTE…RNEL), 1097 to 1107 (EDARSEVDSLK), 1115 to 1141 (KSLK…RANV), and 1179 to 1189 (QVDETKRRLEE). Disordered regions lie at residues 958 to 1049 (ELKA…ELDD), 1068 to 1141 (LAQT…RANV), 1170 to 1195 (AAQA…ASAA), 1213 to 1259 (ADLD…RLEG), 1352 to 1425 (VAKE…NREL), and 1474 to 1509 (QLQD…RAEE). A hinge region spans residues 1227 to 1252 (RKLNTRISELQSELENAPKTGGASSE). A compositionally biased stretch (polar residues) spans 1231 to 1240 (TRISELQSEL). Residues 1253 to 1482 (EVKRLEGELE…AQLQDEIDGT (230 aa)) form an alpha-helical tailpiece (LMM) region. Positions 1253–1509 (EVKRLEGELE…VRAGSARAEE (257 aa)) are light meromyosin (LMM). A nonhelical tailpiece region spans residues 1483-1509 (PSSRGGSTRGASARGASVRAGSARAEE). A compositionally biased stretch (low complexity) spans 1484–1509 (SSRGGSTRGASARGASVRAGSARAEE). Phosphoserine is present on residues Ser1489, Ser1494, and Ser1499.

It belongs to the TRAFAC class myosin-kinesin ATPase superfamily. Myosin family. Myosin II heavy chain is two-headed. It self-assembles into filaments. Hexamer of 2 heavy chain subunits (MHC), 2 alkali light chain subunits (MLC) and 2 regulatory light chain subunits (MLC-2).

Functionally, myosin is a protein that binds to F-actin and has ATPase activity that is activated by F-actin. The protein is Myosin-2 heavy chain, non muscle of Acanthamoeba castellanii (Amoeba).